The following is a 108-amino-acid chain: Large ribosomal subunit protein uL24 (108 aa).

The protein belongs to the universal ribosomal protein uL24 family. In terms of assembly, part of the 50S ribosomal subunit.

One of two assembly initiator proteins, it binds directly to the 5'-end of the 23S rRNA, where it nucleates assembly of the 50S subunit. Its function is as follows. One of the proteins that surrounds the polypeptide exit tunnel on the outside of the subunit. The chain is Large ribosomal subunit protein uL24 from Citrifermentans bemidjiense (strain ATCC BAA-1014 / DSM 16622 / JCM 12645 / Bem) (Geobacter bemidjiensis).